Reading from the N-terminus, the 190-residue chain is MDIGTFWSVAAIPLLILVARIAEASLESVRTIYISKGHANLAAYVGIVKTGIWLISTGLVLTDLMQFWNLFAYLAGYGMGTVLGMEIENLISIGYVIVRLITPSDPQALMSRLSTLGYGMTRIEGTGSFSGSVSIIFMIVPRKELSRLLSIISREYPDLLYTIEDVRNIKDGARIFYQDPKRRILSFFGM.

The next 3 helical transmembrane spans lie at 3 to 23, 41 to 61, and 67 to 87; these read IGTF…RIAE, LAAY…GLVL, and FWNL…GMEI.

It belongs to the UPF0316 family.

The protein localises to the cell membrane. The protein is UPF0316 protein Mboo_0605 of Methanoregula boonei (strain DSM 21154 / JCM 14090 / 6A8).